We begin with the raw amino-acid sequence, 485 residues long: Arginine biosynthesis bifunctional protein ArgJ, mitochondrial (485 aa).

Substrate-binding residues include T185, K214, T225, and E315. The active-site Nucleophile is the T225.

Belongs to the ArgJ family. Heterodimer of an alpha and a beta chain. The alpha and beta chains are autoproteolytically processed from a single precursor protein within the mitochondrion.

The protein localises to the mitochondrion matrix. It carries out the reaction N(2)-acetyl-L-ornithine + L-glutamate = N-acetyl-L-glutamate + L-ornithine. The enzyme catalyses L-glutamate + acetyl-CoA = N-acetyl-L-glutamate + CoA + H(+). The protein operates within amino-acid biosynthesis; L-arginine biosynthesis; L-ornithine and N-acetyl-L-glutamate from L-glutamate and N(2)-acetyl-L-ornithine (cyclic): step 1/1. It functions in the pathway amino-acid biosynthesis; L-arginine biosynthesis; N(2)-acetyl-L-ornithine from L-glutamate: step 1/4. Catalyzes two activities which are involved in the cyclic version of arginine biosynthesis: the synthesis of acetylglutamate from glutamate and acetyl-CoA, and of ornithine by transacetylation between acetylornithine and glutamate. This chain is Arginine biosynthesis bifunctional protein ArgJ, mitochondrial, found in Penicillium rubens (strain ATCC 28089 / DSM 1075 / NRRL 1951 / Wisconsin 54-1255) (Penicillium chrysogenum).